The chain runs to 286 residues: Nucleotide-binding protein PLES_48441 (286 aa).

ATP is bound at residue 8 to 15 (GRSGSGKS). Residue 60–63 (DARN) participates in GTP binding.

This sequence belongs to the RapZ-like family.

Functionally, displays ATPase and GTPase activities. The sequence is that of Nucleotide-binding protein PLES_48441 from Pseudomonas aeruginosa (strain LESB58).